We begin with the raw amino-acid sequence, 292 residues long: 33 kDa chaperonin (292 aa).

Intrachain disulfides connect Cys-230-Cys-232 and Cys-263-Cys-266.

The protein belongs to the HSP33 family. In terms of processing, under oxidizing conditions two disulfide bonds are formed involving the reactive cysteines. Under reducing conditions zinc is bound to the reactive cysteines and the protein is inactive.

It is found in the cytoplasm. Functionally, redox regulated molecular chaperone. Protects both thermally unfolding and oxidatively damaged proteins from irreversible aggregation. Plays an important role in the bacterial defense system toward oxidative stress. This chain is 33 kDa chaperonin, found in Salmonella paratyphi A (strain ATCC 9150 / SARB42).